Reading from the N-terminus, the 238-residue chain is Sugar fermentation stimulation protein homolog (238 aa).

This sequence belongs to the SfsA family.

The polypeptide is Sugar fermentation stimulation protein homolog (Vibrio vulnificus (strain YJ016)).